The sequence spans 109 residues: Phosphoribosyl-AMP cyclohydrolase (109 aa).

Asp-76 is a Mg(2+) binding site. Zn(2+) is bound at residue Cys-77. Mg(2+) is bound by residues Asp-78 and Asp-80. Zn(2+)-binding residues include Cys-93 and Cys-100.

This sequence belongs to the PRA-CH family. In terms of assembly, homodimer. The cofactor is Mg(2+). It depends on Zn(2+) as a cofactor.

It localises to the cytoplasm. It carries out the reaction 1-(5-phospho-beta-D-ribosyl)-5'-AMP + H2O = 1-(5-phospho-beta-D-ribosyl)-5-[(5-phospho-beta-D-ribosylamino)methylideneamino]imidazole-4-carboxamide. The protein operates within amino-acid biosynthesis; L-histidine biosynthesis; L-histidine from 5-phospho-alpha-D-ribose 1-diphosphate: step 3/9. Functionally, catalyzes the hydrolysis of the adenine ring of phosphoribosyl-AMP. The polypeptide is Phosphoribosyl-AMP cyclohydrolase (Streptococcus mutans serotype c (strain ATCC 700610 / UA159)).